Consider the following 114-residue polypeptide: MVTKEQRRQKIKARVRGKISGTQEKPRLTVFRSNKQIYAQLIDDIAGRTLASASSLKLEMTGSKKEIAAKVGDEIAKAATEAGISTVVFDRNGYLFHGRIKELADAARKGGLKF.

This sequence belongs to the universal ribosomal protein uL18 family. In terms of assembly, part of the 50S ribosomal subunit; part of the 5S rRNA/L5/L18/L25 subcomplex. Contacts the 5S and 23S rRNAs.

In terms of biological role, this is one of the proteins that bind and probably mediate the attachment of the 5S RNA into the large ribosomal subunit, where it forms part of the central protuberance. This is Large ribosomal subunit protein uL18 from Porphyromonas gingivalis (strain ATCC BAA-308 / W83).